The following is a 671-amino-acid chain: Protein KHNYN (671 aa).

Disordered regions lie at residues 234–274 (RVAG…LSGE), 294–327 (EVAP…AHVP), 344–402 (HNGS…GGNL), and 577–626 (GPTL…RKTR). The segment covering 250–272 (TVEKEERKQDAVRDMGSGRKELS) has biased composition (basic and acidic residues). Pro residues predominate over residues 351 to 365 (PRVPSPPPAPEPPWP). At Ser-355 the chain carries Phosphoserine. A compositionally biased stretch (basic and acidic residues) spans 367–381 (GDRDRDRDRGDRGDK). Residues 430 to 582 (LRHIVIDGSN…LGRNGPTLDE (153 aa)) enclose the RNase NYN domain. The segment covering 591 to 612 (QGSSKTQQPSKGSTEQANQQQG) has biased composition (polar residues).

The protein belongs to the N4BP1 family.

The sequence is that of Protein KHNYN (Khnyn) from Mus musculus (Mouse).